We begin with the raw amino-acid sequence, 316 residues long: uncharacterized protein (316 aa).

Residues 26 to 98 enclose the S4 RNA-binding domain; that stretch reads ERIDRFLAGA…IPLDVVYEDA (73 aa). Aspartate 148 is a catalytic residue.

The protein belongs to the pseudouridine synthase RluA family.

It carries out the reaction a uridine in RNA = a pseudouridine in RNA. This is an uncharacterized protein from Chloroflexus aurantiacus (strain ATCC 29366 / DSM 635 / J-10-fl).